The following is a 151-amino-acid chain: Large ribosomal subunit protein bL9 (151 aa).

Belongs to the bacterial ribosomal protein bL9 family.

Binds to the 23S rRNA. This chain is Large ribosomal subunit protein bL9, found in Nitrosospira multiformis (strain ATCC 25196 / NCIMB 11849 / C 71).